Reading from the N-terminus, the 278-residue chain is Dermonecrotic toxin LbSicTox-betaIA1a (278 aa).

His12 is an active-site residue. Mg(2+) contacts are provided by Glu32 and Asp34. Residue His48 is the Nucleophile of the active site. 2 disulfide bridges follow: Cys52–Cys58 and Cys54–Cys197. Asp92 contacts Mg(2+). N-linked (GlcNAc...) asparagine glycosylation occurs at Asn258.

Belongs to the arthropod phospholipase D family. Class II subfamily. Class IIb sub-subfamily. As to expression, expressed by the venom gland.

Its subcellular location is the secreted. It catalyses the reaction an N-(acyl)-sphingosylphosphoethanolamine = an N-(acyl)-sphingosyl-1,3-cyclic phosphate + ethanolamine. It carries out the reaction a 1-acyl-sn-glycero-3-phosphocholine = a 1-acyl-sn-glycero-2,3-cyclic phosphate + choline. The enzyme catalyses a 1-acyl-sn-glycero-3-phosphoethanolamine = a 1-acyl-sn-glycero-2,3-cyclic phosphate + ethanolamine. In terms of biological role, this toxin does not show activity on sphingomyelin (SM) and does not show dermonecrotic activities. This toxin is a member of dermonecrotic toxins that cleave the phosphodiester linkage between the phosphate and headgroup of certain phospholipids (sphingolipid and lysolipid substrates), forming an alcohol (often choline) and a cyclic phosphate. It may act on ceramide phosphoethanolamine (CPE), lysophosphatidylcholine (LPC) and lysophosphatidylethanolamine (LPE), but not on lysophosphatidylserine (LPS), and lysophosphatidylglycerol (LPG). It may act by transphosphatidylation, releasing exclusively cyclic phosphate products as second products. The polypeptide is Dermonecrotic toxin LbSicTox-betaIA1a (Loxosceles boneti (North American fiddleback spider)).